Reading from the N-terminus, the 285-residue chain is Phosphatidylserine decarboxylase proenzyme (285 aa).

Catalysis depends on charge relay system; for autoendoproteolytic cleavage activity residues Asp-89, His-146, and Ser-252. Ser-252 acts as the Schiff-base intermediate with substrate; via pyruvic acid; for decarboxylase activity in catalysis. A Pyruvic acid (Ser); by autocatalysis modification is found at Ser-252.

The protein belongs to the phosphatidylserine decarboxylase family. PSD-B subfamily. Prokaryotic type I sub-subfamily. Heterodimer of a large membrane-associated beta subunit and a small pyruvoyl-containing alpha subunit. Pyruvate serves as cofactor. Is synthesized initially as an inactive proenzyme. Formation of the active enzyme involves a self-maturation process in which the active site pyruvoyl group is generated from an internal serine residue via an autocatalytic post-translational modification. Two non-identical subunits are generated from the proenzyme in this reaction, and the pyruvate is formed at the N-terminus of the alpha chain, which is derived from the carboxyl end of the proenzyme. The autoendoproteolytic cleavage occurs by a canonical serine protease mechanism, in which the side chain hydroxyl group of the serine supplies its oxygen atom to form the C-terminus of the beta chain, while the remainder of the serine residue undergoes an oxidative deamination to produce ammonia and the pyruvoyl prosthetic group on the alpha chain. During this reaction, the Ser that is part of the protease active site of the proenzyme becomes the pyruvoyl prosthetic group, which constitutes an essential element of the active site of the mature decarboxylase.

The protein resides in the cell membrane. The catalysed reaction is a 1,2-diacyl-sn-glycero-3-phospho-L-serine + H(+) = a 1,2-diacyl-sn-glycero-3-phosphoethanolamine + CO2. It functions in the pathway phospholipid metabolism; phosphatidylethanolamine biosynthesis; phosphatidylethanolamine from CDP-diacylglycerol: step 2/2. Functionally, catalyzes the formation of phosphatidylethanolamine (PtdEtn) from phosphatidylserine (PtdSer). The sequence is that of Phosphatidylserine decarboxylase proenzyme from Vibrio parahaemolyticus serotype O3:K6 (strain RIMD 2210633).